The primary structure comprises 514 residues: Peptide chain release factor 3 (514 aa).

A tr-type G domain is found at 8 to 268 (KKRRTFAIIS…TFLKFAPEPH (261 aa)). Residues 17–24 (SHPDAGKT), 85–89 (DTPGH), and 139–142 (NKLD) each bind GTP.

Belongs to the TRAFAC class translation factor GTPase superfamily. Classic translation factor GTPase family. PrfC subfamily.

Its subcellular location is the cytoplasm. Functionally, increases the formation of ribosomal termination complexes and stimulates activities of RF-1 and RF-2. It binds guanine nucleotides and has strong preference for UGA stop codons. It may interact directly with the ribosome. The stimulation of RF-1 and RF-2 is significantly reduced by GTP and GDP, but not by GMP. In Streptococcus pneumoniae serotype 19F (strain G54), this protein is Peptide chain release factor 3.